The sequence spans 177 residues: Inorganic pyrophosphatase (177 aa).

Lys-34, Arg-48, and Tyr-60 together coordinate substrate. 3 residues coordinate Mg(2+): Asp-70, Asp-75, and Asp-107. Residue Tyr-144 coordinates substrate.

It belongs to the PPase family. Homohexamer. It depends on Mg(2+) as a cofactor.

Its subcellular location is the cytoplasm. The catalysed reaction is diphosphate + H2O = 2 phosphate + H(+). In terms of biological role, catalyzes the hydrolysis of inorganic pyrophosphate (PPi) forming two phosphate ions. This Picrophilus torridus (strain ATCC 700027 / DSM 9790 / JCM 10055 / NBRC 100828 / KAW 2/3) protein is Inorganic pyrophosphatase.